A 248-amino-acid chain; its full sequence is Myelin protein P0 (248 aa).

The N-terminal stretch at 1–29 is a signal peptide; it reads MAPGAPSSSPSPILAALLFSSLVLSPAQA. Residues 30–143 form the Ig-like V-type domain; that stretch reads IVVYTDKEVY…DIVGKTSQVT (114 aa). At 30–153 the chain is on the extracellular side; sequence IVVYTDKEVY…LYVFEKVPTR (124 aa). The cysteines at positions 50 and 127 are disulfide-linked. Asparagine 122 carries an N-linked (GlcNAc...) (complex) asparagine glycan. The chain crosses the membrane as a helical span at residues 154-179; sequence YGVVLGAVIGGVLGVVLLVLLLFYVV. Residues 180–248 are Cytoplasmic-facing; sequence RYCWLRRQAA…GLGESRKDKK (69 aa). Serine 210 carries the post-translational modification Phosphoserine; by PKC. A disordered region spans residues 222–248; that stretch reads MLDHSRSTKAASEKKAKGLGESRKDKK. The span at 224-248 shows a compositional bias: basic and acidic residues; sequence DHSRSTKAASEKKAKGLGESRKDKK. A phosphoserine mark is found at serine 226 and serine 228. Phosphoserine; by PKC occurs at positions 233 and 243.

It belongs to the myelin P0 protein family. As to quaternary structure, homodimer and homotetramer. Post-translationally, N-glycosylated; contains sulfate-substituted glycan.

It localises to the cell membrane. Functionally, is an adhesion molecule necessary for normal myelination in the peripheral nervous system. It mediates adhesion between adjacent myelin wraps and ultimately drives myelin compaction. The polypeptide is Myelin protein P0 (MPZ) (Equus caballus (Horse)).